An 846-amino-acid chain; its full sequence is Translation initiation factor IF-2 (846 aa).

The interval 198–219 (YKREEEEKKSKAKKAGGKGFKK) is disordered. Residues 207–219 (SKAKKAGGKGFKK) show a composition bias toward basic residues. The tr-type G domain maps to 345–512 (SRAPVVTIMG…AVLLQSEVLE (168 aa)). Positions 354 to 361 (GHVDHGKT) are G1. 354–361 (GHVDHGKT) provides a ligand contact to GTP. The tract at residues 379–383 (GITQH) is G2. A G3 region spans residues 400-403 (DTPG). GTP is bound by residues 400-404 (DTPGH) and 454-457 (NKID). Positions 454-457 (NKID) are G4. The tract at residues 490–492 (SAK) is G5.

It belongs to the TRAFAC class translation factor GTPase superfamily. Classic translation factor GTPase family. IF-2 subfamily.

It localises to the cytoplasm. Its function is as follows. One of the essential components for the initiation of protein synthesis. Protects formylmethionyl-tRNA from spontaneous hydrolysis and promotes its binding to the 30S ribosomal subunits. Also involved in the hydrolysis of GTP during the formation of the 70S ribosomal complex. The sequence is that of Translation initiation factor IF-2 from Francisella tularensis subsp. tularensis (strain SCHU S4 / Schu 4).